The sequence spans 310 residues: Ribosomal RNA small subunit methyltransferase H (310 aa).

Residues 47-49 (GGH), D66, F93, D108, and Q115 each bind S-adenosyl-L-methionine.

The protein belongs to the methyltransferase superfamily. RsmH family.

It localises to the cytoplasm. The enzyme catalyses cytidine(1402) in 16S rRNA + S-adenosyl-L-methionine = N(4)-methylcytidine(1402) in 16S rRNA + S-adenosyl-L-homocysteine + H(+). Specifically methylates the N4 position of cytidine in position 1402 (C1402) of 16S rRNA. This is Ribosomal RNA small subunit methyltransferase H from Prochlorococcus marinus (strain MIT 9303).